Consider the following 78-residue polypeptide: MSDTEERVKKIIVEHLGVDADKVVQNASFIDDLGADSLDTVELVMAFEEEFGIEIPDDAAETIFTVNDAVKFIDKASS.

Residues 2 to 77 form the Carrier domain; it reads SDTEERVKKI…DAVKFIDKAS (76 aa). An O-(pantetheine 4'-phosphoryl)serine modification is found at Ser-37.

Belongs to the acyl carrier protein (ACP) family. In terms of processing, 4'-phosphopantetheine is transferred from CoA to a specific serine of apo-ACP by AcpS. This modification is essential for activity because fatty acids are bound in thioester linkage to the sulfhydryl of the prosthetic group.

It localises to the cytoplasm. It functions in the pathway lipid metabolism; fatty acid biosynthesis. Carrier of the growing fatty acid chain in fatty acid biosynthesis. This Bartonella bacilliformis (strain ATCC 35685 / KC583 / Herrer 020/F12,63) protein is Acyl carrier protein.